We begin with the raw amino-acid sequence, 429 residues long: Divergent protein kinase domain 2A (429 aa).

The N-terminal stretch at 1-34 (MLRLASLKFGRLFRYAKVLFAASLLVVMLLNTHS) is a signal peptide.

This sequence belongs to the DIPK family.

The protein localises to the cytoplasmic vesicle. It localises to the COPI-coated vesicle. Its subcellular location is the golgi apparatus. It is found in the secreted. Its function is as follows. May play a role in cardiomyocyte proliferation through paracrine signaling and activation of the PPI3K-AKT-CDK7 signaling cascade. This Xenopus tropicalis (Western clawed frog) protein is Divergent protein kinase domain 2A (dipk2a).